The sequence spans 204 residues: Adenylyl-sulfate kinase (204 aa).

Position 34 to 41 (34 to 41 (GLSGSGKS)) interacts with ATP. Catalysis depends on Ser-108, which acts as the Phosphoserine intermediate.

This sequence belongs to the APS kinase family.

It carries out the reaction adenosine 5'-phosphosulfate + ATP = 3'-phosphoadenylyl sulfate + ADP + H(+). It participates in sulfur metabolism; hydrogen sulfide biosynthesis; sulfite from sulfate: step 2/3. Its function is as follows. Catalyzes the synthesis of activated sulfate. This chain is Adenylyl-sulfate kinase, found in Phocaeicola vulgatus (strain ATCC 8482 / DSM 1447 / JCM 5826 / CCUG 4940 / NBRC 14291 / NCTC 11154) (Bacteroides vulgatus).